The chain runs to 1217 residues: Splicing factor 3B subunit 3 (1217 aa).

Interaction with PHF5A, SF3B1 and SF3B5 regions lie at residues Glu-105–Gln-119 and Asn-145–Tyr-168. Ser-156 carries the post-translational modification Phosphoserine. 2 interaction with SF3B1 and SF3B5 regions span residues Asp-193 to His-231 and Arg-786 to His-804. An interaction with SF3B1 region spans residues Thr-1028–Lys-1049. Positions Thr-1100–Ser-1123 are interaction with SF3B5. The residue at position 1200 (Thr-1200) is a Phosphothreonine.

Belongs to the RSE1 family. As to quaternary structure, component of the 17S U2 SnRNP complex, a ribonucleoprotein complex that contains small nuclear RNA (snRNA) U2 and a number of specific proteins. Part of the SF3B subcomplex of the 17S U2 SnRNP complex. SF3B associates with the splicing subcomplex SF3A and a 12S RNA unit to form the U2 small nuclear ribonucleoproteins complex (U2 snRNP). Within the SF3B subcomplex, interacts directly with SF3B1 (via HEAT domain), SF3B5 and PHF5A. Identified in the spliceosome A complex; remains associated with the spliceosome throughout the splicing process. Component of the spliceosome B complex. Identified in the spliceosome C complex. Identified in the spliceosome E complex. Component of the minor (U12-type spliceosome) spliceosome. Within this complex, interacts with SCNM1. Associates with the STAGA transcription coactivator-HAT complex. Interacts with SUPT3H. Interacts with TAF3.

It is found in the nucleus. Functionally, component of the 17S U2 SnRNP complex of the spliceosome, a large ribonucleoprotein complex that removes introns from transcribed pre-mRNAs. The 17S U2 SnRNP complex (1) directly participates in early spliceosome assembly and (2) mediates recognition of the intron branch site during pre-mRNA splicing by promoting the selection of the pre-mRNA branch-site adenosine, the nucleophile for the first step of splicing. Within the 17S U2 SnRNP complex, SF3B3 is part of the SF3B subcomplex, which is required for 'A' complex assembly formed by the stable binding of U2 snRNP to the branchpoint sequence in pre-mRNA. Sequence independent binding of SF3A and SF3B subcomplexes upstream of the branch site is essential, it may anchor U2 snRNP to the pre-mRNA. May also be involved in the assembly of the 'E' complex. Also acts as a component of the minor spliceosome, which is involved in the splicing of U12-type introns in pre-mRNAs. This is Splicing factor 3B subunit 3 (SF3B3) from Pongo abelii (Sumatran orangutan).